The sequence spans 82 residues: Antitoxin MazE2 (82 aa).

As to quaternary structure, probably forms a complex with cognate toxin MazF2.

Antitoxin component of a type II toxin-antitoxin (TA) system. Labile antitoxin that binds to cognate MazF2 toxin and counteracts its endoribonuclease activity. This chain is Antitoxin MazE2 (mazE2), found in Mycobacterium bovis (strain ATCC BAA-935 / AF2122/97).